Reading from the N-terminus, the 58-residue chain is Small ribosomal subunit protein bS21 (58 aa).

A disordered region spans residues 36–58 (RHHETPVEKYKRKLQQRRRSRRR). A compositionally biased stretch (basic residues) spans 45–58 (YKRKLQQRRRSRRR).

The protein belongs to the bacterial ribosomal protein bS21 family.

The chain is Small ribosomal subunit protein bS21 from Prochlorococcus marinus (strain NATL1A).